A 185-amino-acid chain; its full sequence is Threonylcarbamoyl-AMP synthase (185 aa).

The YrdC-like domain occupies 1-185 (MDNLQQVVSA…AFSDTVLRQG (185 aa)).

Belongs to the SUA5 family. TsaC subfamily.

Its subcellular location is the cytoplasm. The catalysed reaction is L-threonine + hydrogencarbonate + ATP = L-threonylcarbamoyladenylate + diphosphate + H2O. Required for the formation of a threonylcarbamoyl group on adenosine at position 37 (t(6)A37) in tRNAs that read codons beginning with adenine. Catalyzes the conversion of L-threonine, HCO(3)(-)/CO(2) and ATP to give threonylcarbamoyl-AMP (TC-AMP) as the acyladenylate intermediate, with the release of diphosphate. The polypeptide is Threonylcarbamoyl-AMP synthase (Photobacterium profundum (strain SS9)).